A 206-amino-acid polypeptide reads, in one-letter code: Small ribosomal subunit protein uS4c (206 aa).

Basic residues-rich tracts occupy residues 1–13 and 25–34; these read MSRY…RITR and QSKKKGRPGQ. Residues 1 to 50 are disordered; it reads MSRYRGPKLRITRRLGALPGLTQKQSKKKGRPGQHGKSNEADNSKKTTEY. Residues 37-50 are compositionally biased toward basic and acidic residues; sequence KSNEADNSKKTTEY. Residues 95-157 enclose the S4 RNA-binding domain; sequence MRLDTICFTL…ATSKNLVEGN (63 aa).

It belongs to the universal ribosomal protein uS4 family. Part of the 30S ribosomal subunit. Contacts protein S5. The interaction surface between S4 and S5 is involved in control of translational fidelity.

It localises to the plastid. The protein localises to the chloroplast. Functionally, one of the primary rRNA binding proteins, it binds directly to 16S rRNA where it nucleates assembly of the body of the 30S subunit. In terms of biological role, with S5 and S12 plays an important role in translational accuracy. The polypeptide is Small ribosomal subunit protein uS4c (rps4) (Trieres chinensis (Marine centric diatom)).